The following is a 151-amino-acid chain: uncharacterized protein (151 aa).

3 helical membrane passes run G14–I34, I45–I65, and V91–I111.

The protein localises to the cell membrane. This is an uncharacterized protein from Bacillus subtilis (strain 168).